Here is a 413-residue protein sequence, read N- to C-terminus: Gamma-glutamyl phosphate reductase (413 aa).

It belongs to the gamma-glutamyl phosphate reductase family.

It is found in the cytoplasm. The catalysed reaction is L-glutamate 5-semialdehyde + phosphate + NADP(+) = L-glutamyl 5-phosphate + NADPH + H(+). It participates in amino-acid biosynthesis; L-proline biosynthesis; L-glutamate 5-semialdehyde from L-glutamate: step 2/2. Catalyzes the NADPH-dependent reduction of L-glutamate 5-phosphate into L-glutamate 5-semialdehyde and phosphate. The product spontaneously undergoes cyclization to form 1-pyrroline-5-carboxylate. The protein is Gamma-glutamyl phosphate reductase of Alkaliphilus oremlandii (strain OhILAs) (Clostridium oremlandii (strain OhILAs)).